A 100-amino-acid polypeptide reads, in one-letter code: NADH-quinone oxidoreductase subunit K (100 aa).

3 consecutive transmembrane segments (helical) span residues V2–V22, L28–A48, and F63–W83.

This sequence belongs to the complex I subunit 4L family. As to quaternary structure, NDH-1 is composed of 14 different subunits. Subunits NuoA, H, J, K, L, M, N constitute the membrane sector of the complex.

The protein resides in the cell inner membrane. It catalyses the reaction a quinone + NADH + 5 H(+)(in) = a quinol + NAD(+) + 4 H(+)(out). NDH-1 shuttles electrons from NADH, via FMN and iron-sulfur (Fe-S) centers, to quinones in the respiratory chain. The immediate electron acceptor for the enzyme in this species is believed to be ubiquinone. Couples the redox reaction to proton translocation (for every two electrons transferred, four hydrogen ions are translocated across the cytoplasmic membrane), and thus conserves the redox energy in a proton gradient. This Wolinella succinogenes (strain ATCC 29543 / DSM 1740 / CCUG 13145 / JCM 31913 / LMG 7466 / NCTC 11488 / FDC 602W) (Vibrio succinogenes) protein is NADH-quinone oxidoreductase subunit K.